A 189-amino-acid chain; its full sequence is CDP-archaeol synthase (189 aa).

A run of 5 helical transmembrane segments spans residues 6–26 (VAIA…AVLA), 71–91 (GVVL…TVGV), 96–116 (IAAA…ASFL), 125–145 (GAAF…ALTA), and 162–184 (VAIF…AFGL).

This sequence belongs to the CDP-archaeol synthase family. It depends on Mg(2+) as a cofactor.

It localises to the cell membrane. The catalysed reaction is 2,3-bis-O-(geranylgeranyl)-sn-glycerol 1-phosphate + CTP + H(+) = CDP-2,3-bis-O-(geranylgeranyl)-sn-glycerol + diphosphate. Its pathway is membrane lipid metabolism; glycerophospholipid metabolism. Functionally, catalyzes the formation of CDP-2,3-bis-(O-geranylgeranyl)-sn-glycerol (CDP-archaeol) from 2,3-bis-(O-geranylgeranyl)-sn-glycerol 1-phosphate (DGGGP) and CTP. This reaction is the third ether-bond-formation step in the biosynthesis of archaeal membrane lipids. This Natronomonas pharaonis (strain ATCC 35678 / DSM 2160 / CIP 103997 / JCM 8858 / NBRC 14720 / NCIMB 2260 / Gabara) (Halobacterium pharaonis) protein is CDP-archaeol synthase.